The chain runs to 460 residues: Argininosuccinate lyase (460 aa).

Belongs to the lyase 1 family. Argininosuccinate lyase subfamily.

The protein resides in the cytoplasm. The catalysed reaction is 2-(N(omega)-L-arginino)succinate = fumarate + L-arginine. It participates in amino-acid biosynthesis; L-arginine biosynthesis; L-arginine from L-ornithine and carbamoyl phosphate: step 3/3. The sequence is that of Argininosuccinate lyase from Streptococcus mutans serotype c (strain ATCC 700610 / UA159).